The primary structure comprises 297 residues: tRNA dimethylallyltransferase (297 aa).

15-22 (GPTASGKS) contributes to the ATP binding site. Residue 17–22 (TASGKS) coordinates substrate. Interaction with substrate tRNA stretches follow at residues 40-43 (DSMQ) and 164-168 (QRIVR).

Belongs to the IPP transferase family. Monomer. Requires Mg(2+) as cofactor.

The catalysed reaction is adenosine(37) in tRNA + dimethylallyl diphosphate = N(6)-dimethylallyladenosine(37) in tRNA + diphosphate. Functionally, catalyzes the transfer of a dimethylallyl group onto the adenine at position 37 in tRNAs that read codons beginning with uridine, leading to the formation of N6-(dimethylallyl)adenosine (i(6)A). The polypeptide is tRNA dimethylallyltransferase (Rhizobium etli (strain CIAT 652)).